Reading from the N-terminus, the 282-residue chain is Biotin synthase (282 aa).

Residues 1–228 form the Radical SAM core domain; that stretch reads MQEIFLCSIS…NARLMVAGGR (228 aa). 3 residues coordinate [4Fe-4S] cluster: Cys17, Cys21, and Cys24. [2Fe-2S] cluster-binding residues include Cys61, Cys96, Cys154, and Arg221.

Belongs to the radical SAM superfamily. Biotin synthase family. As to quaternary structure, homodimer. [4Fe-4S] cluster serves as cofactor. The cofactor is [2Fe-2S] cluster.

It catalyses the reaction (4R,5S)-dethiobiotin + (sulfur carrier)-SH + 2 reduced [2Fe-2S]-[ferredoxin] + 2 S-adenosyl-L-methionine = (sulfur carrier)-H + biotin + 2 5'-deoxyadenosine + 2 L-methionine + 2 oxidized [2Fe-2S]-[ferredoxin]. Its pathway is cofactor biosynthesis; biotin biosynthesis; biotin from 7,8-diaminononanoate: step 2/2. Catalyzes the conversion of dethiobiotin (DTB) to biotin by the insertion of a sulfur atom into dethiobiotin via a radical-based mechanism. The chain is Biotin synthase from Helicobacter pylori (strain HPAG1).